Here is a 452-residue protein sequence, read N- to C-terminus: Pup--protein ligase (452 aa).

E9 is a binding site for Mg(2+). An ATP-binding site is contributed by R53. Position 55 (Y55) interacts with Mg(2+). The Proton acceptor role is filled by D57. E63 lines the Mg(2+) pocket. The ATP site is built by T66 and W419.

The protein belongs to the Pup ligase/Pup deamidase family. Pup-conjugating enzyme subfamily.

It carries out the reaction ATP + [prokaryotic ubiquitin-like protein]-L-glutamate + [protein]-L-lysine = ADP + phosphate + N(6)-([prokaryotic ubiquitin-like protein]-gamma-L-glutamyl)-[protein]-L-lysine.. The protein operates within protein degradation; proteasomal Pup-dependent pathway. It functions in the pathway protein modification; protein pupylation. In terms of biological role, catalyzes the covalent attachment of the prokaryotic ubiquitin-like protein modifier Pup to the proteasomal substrate proteins, thereby targeting them for proteasomal degradation. This tagging system is termed pupylation. The ligation reaction involves the side-chain carboxylate of the C-terminal glutamate of Pup and the side-chain amino group of a substrate lysine. In Mycobacterium avium (strain 104), this protein is Pup--protein ligase.